Consider the following 223-residue polypeptide: Expansin-B6 (223 aa).

The region spanning 16–124 (GGACGFAVAN…RRVECLYRRT (109 aa)) is the Expansin-like EG45 domain. Cystine bridges form between C19/C46, C49/C119, and C54/C60. The region spanning 137–218 (YYISFVVEYE…NWKPNETYRS (82 aa)) is the Expansin-like CBD domain. Residue N213 is glycosylated (N-linked (GlcNAc...) asparagine).

Belongs to the expansin family. Expansin B subfamily.

The protein localises to the secreted. The protein resides in the cell wall. It localises to the membrane. May cause loosening and extension of plant cell walls by disrupting non-covalent bonding between cellulose microfibrils and matrix glucans. The protein is Expansin-B6 of Arabidopsis thaliana (Mouse-ear cress).